A 546-amino-acid polypeptide reads, in one-letter code: Probable bifunctional SAT/APS kinase (546 aa).

Residues 1 to 370 (MEKIKYLKSI…LAETYVPKHK (370 aa)) are sulfate adenylyltransferase. Positions 371–546 (QGFCVWLTGL…FLKKEGFIKD (176 aa)) are adenylsulfate kinase. 379–386 (GLPCAGKS) contributes to the ATP binding site. S453 serves as the catalytic Phosphoserine intermediate.

In the N-terminal section; belongs to the sulfate adenylyltransferase family. It in the C-terminal section; belongs to the APS kinase family.

It catalyses the reaction sulfate + ATP + H(+) = adenosine 5'-phosphosulfate + diphosphate. The catalysed reaction is adenosine 5'-phosphosulfate + ATP = 3'-phosphoadenylyl sulfate + ADP + H(+). Its pathway is sulfur metabolism; hydrogen sulfide biosynthesis; sulfite from sulfate: step 1/3. The protein operates within sulfur metabolism; hydrogen sulfide biosynthesis; sulfite from sulfate: step 2/3. The polypeptide is Probable bifunctional SAT/APS kinase (sat/cysC) (Aquifex aeolicus (strain VF5)).